Reading from the N-terminus, the 181-residue chain is Peptidyl-tRNA hydrolase (181 aa).

Residue Y14 coordinates tRNA. H19 functions as the Proton acceptor in the catalytic mechanism. TRNA is bound by residues Y62, N64, and N108.

It belongs to the PTH family. As to quaternary structure, monomer.

It is found in the cytoplasm. The catalysed reaction is an N-acyl-L-alpha-aminoacyl-tRNA + H2O = an N-acyl-L-amino acid + a tRNA + H(+). Hydrolyzes ribosome-free peptidyl-tRNAs (with 1 or more amino acids incorporated), which drop off the ribosome during protein synthesis, or as a result of ribosome stalling. In terms of biological role, catalyzes the release of premature peptidyl moieties from peptidyl-tRNA molecules trapped in stalled 50S ribosomal subunits, and thus maintains levels of free tRNAs and 50S ribosomes. This Campylobacter jejuni subsp. doylei (strain ATCC BAA-1458 / RM4099 / 269.97) protein is Peptidyl-tRNA hydrolase.